We begin with the raw amino-acid sequence, 132 residues long: Small ribosomal subunit protein uS8c (132 aa).

This sequence belongs to the universal ribosomal protein uS8 family. Part of the 30S ribosomal subunit.

Its subcellular location is the plastid. It is found in the chloroplast. One of the primary rRNA binding proteins, it binds directly to 16S rRNA central domain where it helps coordinate assembly of the platform of the 30S subunit. This Phaeodactylum tricornutum (strain CCAP 1055/1) protein is Small ribosomal subunit protein uS8c (rps8).